The sequence spans 1031 residues: Sodium/potassium-transporting ATPase subunit alpha (1031 aa).

A disordered region spans residues 1 to 33; it reads MADPGDLESRGKADSYSVAEKKSAPKKISKKNA. Positions 7-23 are enriched in basic and acidic residues; sequence LESRGKADSYSVAEKKS. Residues 24-33 show a composition bias toward basic residues; it reads APKKISKKNA. 4 helical membrane passes run 102-123, 136-155, 297-319, and 326-354; these read MFGGFSMLLWIGAILCFFAFGI, LYLGIVLSVVVIITGCFSYY, FIHIVTGVAVFLGVSFLIISLAM, and AIIFLIGIIVANVPEGLLATVTVCLTLTA. Residue Asp-382 is the 4-aspartylphosphate intermediate of the active site. Lys-512 is a binding site for ATP. Mg(2+) contacts are provided by Asp-725 and Asp-729. Helical transmembrane passes span 795 to 818, 857 to 882, 924 to 944, and 961 to 986; these read ISPFLMFILFGIPLPLGTITILCI, LISLAYGQIGMMQATAGFFTYFIILA, LTCQTAFFTTIVVVQWADLII, and FLNFGLFFETALAAFLQYTPGVNTGL.

It belongs to the cation transport ATPase (P-type) (TC 3.A.3) family. Type IIC subfamily. As to quaternary structure, the sodium/potassium-transporting ATPase is composed of a catalytic alpha subunit, an auxiliary non-catalytic beta subunit and an additional regulatory subunit.

It is found in the cell membrane. The enzyme catalyses K(+)(out) + Na(+)(in) + ATP + H2O = K(+)(in) + Na(+)(out) + ADP + phosphate + H(+). Its activity is regulated as follows. This alpha subunit is resistant to ouabain. Its function is as follows. This is the catalytic component of the active enzyme, which catalyzes the hydrolysis of ATP coupled with the exchange of sodium and potassium ions across the plasma membrane. This action creates the electrochemical gradient of sodium and potassium ions, providing the energy for active transport of various nutrients. This Hydra vulgaris (Hydra) protein is Sodium/potassium-transporting ATPase subunit alpha.